A 937-amino-acid polypeptide reads, in one-letter code: MATAAESGARTWPGSGSPRLGSPAGSPVLGISGRARPGSGPERTGRAIGSVAPGHSFRKVTLTKPTFCHLCSDFIWGLAGFLCDVCNFMSHEKCLKQVKTPCTSIAPSLVRVPVAHCFGSLGLYKRKFCVVCRKSLEVPAFRCEVCELHVHPDCVPFACSDCRQCHQDGQHDYDTYHHHWREGNLPSGARCEVCRKTCGSSDVLAGVRCEWCGVQAHSVCSTALTPECTFGRLRSMVLPPSCVRLLSRNFSKMHCFRIPETMVLELGDGDDGLDGSAAVGTGREVSAATESTKQTLKIFDGNDSMRKNQFRLVTVSRLARNEEVMEAALRAYYINEDPKDFQLQALPLTLLSGNAQALGKAGTTEEETSKDSGPGDSVPEAWVIRSLPRTQEILKIYPDWLKVGVAYVSIRVNSQSTARSVVQEVLPLFGRQVEDQERFQLIEVLMSSRQVQRTVLVDEEPLLDRLRDIRQTSVRQASQTRFYVAEARAVTPHVSLFVGGLPPGLSPQDYSNLLHEAMATKAAVVSVSHVYSLQGAVVLDVTCFAEAERLYMLARDTAVHGRPLTALVLPDVLHTKLPPDCCPLLVFVNPKSGGLKGRELLCSFRKLLNPHQVFELTNGGPLPGFHLFSQVPCFRVLVCGGDGTVGWVLAALEETRRHLACPEPSVAILPLGTGNDLGRVLRWGAGYSGEDPFSVLVSVDEADAVLMDRWTILLDAHEIDSTENNVVETEPPKIVQMNNYCGIGIDAELSLDFHQAREEEPGKFTSRFHNKGVYVRVGLQKISHSRSLHKEIRLQVEQQEVELPSIEGLIFINIPSWGSGADLWGSDSDSRFEKPRIDDGLLEVVGVTGVVHMGQVQGGLRSGIRIAQGSYFRVTLLKATPVQVDGEPWIQAPGHMIISATAPKVHMLRKAKQKPRKAGAIRDTRVDTLPAPEGNPL.

A disordered region spans residues 1–48; sequence MATAAESGARTWPGSGSPRLGSPAGSPVLGISGRARPGSGPERTGRAI. A phosphoserine mark is found at Ser22 and Ser26. 3 consecutive Phorbol-ester/DAG-type zinc fingers follow at residues 54–102, 115–162, and 177–228; these read GHSF…KTPC, AHCF…CSDC, and HHHW…TPEC. Residues 359 to 378 are disordered; the sequence is GKAGTTEEETSKDSGPGDSV. A Ras-associating domain is found at 390–489; the sequence is TQEILKIYPD…TRFYVAEARA (100 aa). Short sequence motifs (LXXLL motif) lie at residues 550 to 554 and 569 to 573; these read LYMLA and LPDVL. Residues 579-716 form the DAGKc domain; sequence PDCCPLLVFV…MDRWTILLDA (138 aa). The disordered stretch occupies residues 911–937; the sequence is AKQKPRKAGAIRDTRVDTLPAPEGNPL.

The protein belongs to the eukaryotic diacylglycerol kinase family. In terms of assembly, interacts with RHOA (constitutively activated, GTP-bound); the interaction inhibits DGKQ. Interacts with PRKCE. Interacts with PRKCH. Interacts with PLCB1. Interacts with NR5A1; the interaction requires both LXXLL motifs in DGKQ and is required for full phosphatidic acid-mediated activation of NR5A1. Phosphorylated by PRKCE and PRKCH in vitro. In terms of tissue distribution, widely expressed with higher expression in the brain and, to a lesser extent, in the small intestine, duodenum, and liver. In brain, expressed in gray matter. Expression is most intense in the cerebellar cortex and hippocampus, while moderate expression is seen in the olfactory bulb neuronal layers and brain stem nuclei. In the cerebellar cortex, equally expressed in both the Purkinje cell somata and the granule cells.

Its subcellular location is the cytoplasm. It localises to the cytosol. The protein localises to the cell membrane. It is found in the synapse. The protein resides in the cytoskeleton. Its subcellular location is the nucleus. It localises to the nucleus speckle. The protein localises to the nucleus matrix. The catalysed reaction is a 1,2-diacyl-sn-glycerol + ATP = a 1,2-diacyl-sn-glycero-3-phosphate + ADP + H(+). The enzyme catalyses a 1-O-alkyl-sn-glycerol + ATP = a 1-O-alkyl-sn-glycero-3-phosphate + ADP + H(+). It catalyses the reaction 1-O-alkyl-2-acyl-sn-glycerol + ATP = 1-O-alkyl-2-acyl-sn-glycero-3-phosphate + ADP + H(+). It carries out the reaction 1,2-di-(9Z-octadecenoyl)-sn-glycerol + ATP = 1,2-di-(9Z-octadecenoyl)-sn-glycero-3-phosphate + ADP + H(+). The catalysed reaction is 1-O-hexadecyl-sn-glycerol + ATP = 1-O-hexadecyl-sn-glycero-3-phosphate + ADP + H(+). The enzyme catalyses 1-O-hexadecyl-2-acetyl-sn-glycerol + ATP = 1-O-hexadecyl-2-acetyl-sn-glycero-3-phosphate + ADP + H(+). It catalyses the reaction 1-octadecanoyl-2-(5Z,8Z,11Z,14Z-eicosatetraenoyl)-sn-glycerol + ATP = 1-octadecanoyl-2-(5Z,8Z,11Z,14Z-eicosatetraenoyl)-sn-glycero-3-phosphate + ADP + H(+). Its pathway is lipid metabolism; glycerolipid metabolism. Activated by phosphatidylserine. Its function is as follows. Diacylglycerol kinase that converts diacylglycerol/DAG into phosphatidic acid/phosphatidate/PA and regulates the respective levels of these two bioactive lipids. Thereby, acts as a central switch between the signaling pathways activated by these second messengers with different cellular targets and opposite effects in numerous biological processes. Within the adrenocorticotropic hormone signaling pathway, produces phosphatidic acid which in turn activates NR5A1 and subsequent steroidogenic gene transcription. Also functions downstream of the nerve growth factor signaling pathway being specifically activated in the nucleus by the growth factor. Through its diacylglycerol activity also regulates synaptic vesicle endocytosis. The sequence is that of Diacylglycerol kinase theta from Rattus norvegicus (Rat).